Consider the following 177-residue polypeptide: Inner membrane-spanning protein YciB (177 aa).

The next 5 helical transmembrane spans lie at 22-42, 50-70, 76-96, 121-141, and 149-169; these read IFIASGSLIVISGLICIIHWI, ISLFSFLSVFFFGSLTIFFHN, WKITIIYIIFSLVLLISQFFT, FIWSLFFLFCAILNIYIAYYF, and FKVFGFTSLTFFLILITSIYI.

It belongs to the YciB family.

It is found in the cell inner membrane. Functionally, plays a role in cell envelope biogenesis, maintenance of cell envelope integrity and membrane homeostasis. The protein is Inner membrane-spanning protein YciB of Buchnera aphidicola subsp. Acyrthosiphon pisum (strain APS) (Acyrthosiphon pisum symbiotic bacterium).